The chain runs to 181 residues: Oligoribonuclease (181 aa).

Positions 8 to 171 (LIWVDLEMTG…DDIRESIAEL (164 aa)) constitute an Exonuclease domain. Residue tyrosine 129 is part of the active site.

The protein belongs to the oligoribonuclease family.

The protein resides in the cytoplasm. Functionally, 3'-to-5' exoribonuclease specific for small oligoribonucleotides. This Aliivibrio fischeri (strain ATCC 700601 / ES114) (Vibrio fischeri) protein is Oligoribonuclease.